Reading from the N-terminus, the 947-residue chain is Bifunctional glutamine synthetase adenylyltransferase/adenylyl-removing enzyme (947 aa).

Positions 1–440 (MTPLSSPLSQ…VFNELIGDDE (440 aa)) are adenylyl removase. The interval 450–947 (SEPWREVWQD…ASWRKWLVAV (498 aa)) is adenylyl transferase.

It belongs to the GlnE family. The cofactor is Mg(2+).

It carries out the reaction [glutamine synthetase]-O(4)-(5'-adenylyl)-L-tyrosine + phosphate = [glutamine synthetase]-L-tyrosine + ADP. The enzyme catalyses [glutamine synthetase]-L-tyrosine + ATP = [glutamine synthetase]-O(4)-(5'-adenylyl)-L-tyrosine + diphosphate. Involved in the regulation of glutamine synthetase GlnA, a key enzyme in the process to assimilate ammonia. When cellular nitrogen levels are high, the C-terminal adenylyl transferase (AT) inactivates GlnA by covalent transfer of an adenylyl group from ATP to specific tyrosine residue of GlnA, thus reducing its activity. Conversely, when nitrogen levels are low, the N-terminal adenylyl removase (AR) activates GlnA by removing the adenylyl group by phosphorolysis, increasing its activity. The regulatory region of GlnE binds the signal transduction protein PII (GlnB) which indicates the nitrogen status of the cell. In Salmonella typhimurium (strain LT2 / SGSC1412 / ATCC 700720), this protein is Bifunctional glutamine synthetase adenylyltransferase/adenylyl-removing enzyme.